The sequence spans 807 residues: Ribosome-releasing factor 2, mitochondrial (807 aa).

A mitochondrion-targeting transit peptide spans 1–18 (MFCRKYAFQTWKQFSRFY). The tr-type G domain maps to 27-315 (SKTRNIGIIA…GITKYLPSPL (289 aa)). GTP is bound by residues 36-43 (AHIDAGKT), 100-104 (DTPGH), and 154-157 (NKMD).

The protein belongs to the TRAFAC class translation factor GTPase superfamily. Classic translation factor GTPase family. EF-G/EF-2 subfamily.

It localises to the mitochondrion. Its function is as follows. Mitochondrial GTPase that mediates the disassembly of ribosomes from messenger RNA at the termination of mitochondrial protein biosynthesis. Not involved in the GTP-dependent ribosomal translocation step during translation elongation. The sequence is that of Ribosome-releasing factor 2, mitochondrial from Candida dubliniensis (strain CD36 / ATCC MYA-646 / CBS 7987 / NCPF 3949 / NRRL Y-17841) (Yeast).